Here is a 544-residue protein sequence, read N- to C-terminus: MPKQLYFNEDARRALKRGVDIVADAVKTTLGPRGRNVSIDKKFGAPTVTHDGVTVAKEIELKDPFENMGARLLVEVATKTNDVVGDGTTTATVLAQSIVNEGLKMVAAGANPMLIKRGLDKAVEAVVAELKSVAIPVRDRADIAHVAAISAADSEIGDLIAEVMEKVGKDGVITVEESKGIAFEKEYTEGMQIDRGYISPYFVTNPERMEAELEDPYILITDKKISSIQDILPVLEKALQVTKNLVIIAEDVDGEALATLVVNKLRGTINALAVKAPGFGDRRKAMLQDIAILTGGTLISEEIGRKLDSATVEDLGRARRVVSDKDNTTIIEGRGDERAIRARIEQIRAQIETTTSDFDREKLQERLAKLAGGVAVLKVGAATEPELKEKKHRVEDALSTARSAVEEGIVPGGGVALLNAIPALDRVQVTYEDEKYGVQILRRALEEPMRQLARNAGEDGAVIIDTVRRLQKEKNDKNIGYNVLTGEFGSMIEMGIIDPVKVTRSAVQNAVSIAGLLLTTEALIADIPEEKPATPTPGGGGMDF.

ATP contacts are provided by residues 29-32, 86-90, Gly-413, 482-484, and Asp-498; these read TLGP, DGTTT, and NVL.

It belongs to the chaperonin (HSP60) family. As to quaternary structure, forms a cylinder of 14 subunits composed of two heptameric rings stacked back-to-back. Interacts with the co-chaperonin GroES.

It is found in the cytoplasm. The enzyme catalyses ATP + H2O + a folded polypeptide = ADP + phosphate + an unfolded polypeptide.. Together with its co-chaperonin GroES, plays an essential role in assisting protein folding. The GroEL-GroES system forms a nano-cage that allows encapsulation of the non-native substrate proteins and provides a physical environment optimized to promote and accelerate protein folding. This chain is Chaperonin GroEL 2, found in Roseiflexus sp. (strain RS-1).